Reading from the N-terminus, the 1571-residue chain is Pentafunctional AROM polypeptide 2 (1571 aa).

The segment at 1 to 380 (MAEPTKISIL…YEPKASVVSN (380 aa)) is 3-dehydroquinate synthase. Residues 44–46 (DTN), 81–84 (ENSK), 112–114 (GGV), and Asp-117 contribute to the NAD(+) site. Arg-128 contacts 7-phospho-2-dehydro-3-deoxy-D-arabino-heptonate. Position 137–138 (137–138 (TT)) interacts with NAD(+). Asp-144 and Lys-150 together coordinate 7-phospho-2-dehydro-3-deoxy-D-arabino-heptonate. Lys-159 contacts NAD(+). Asn-160 is a binding site for 7-phospho-2-dehydro-3-deoxy-D-arabino-heptonate. Residues 177 to 180 (FIDT) and Asn-188 contribute to the NAD(+) site. Position 192 (Glu-192) interacts with Zn(2+). 7-phospho-2-dehydro-3-deoxy-D-arabino-heptonate is bound by residues 192–195 (EVIK) and Lys-246. Residue Glu-256 is the Proton acceptor; for 3-dehydroquinate synthase activity of the active site. 7-phospho-2-dehydro-3-deoxy-D-arabino-heptonate-binding positions include 260 to 264 (RNLLN) and His-267. A Zn(2+)-binding site is contributed by His-267. The Proton acceptor; for 3-dehydroquinate synthase activity role is filled by His-271. Residues His-283 and Lys-352 each coordinate 7-phospho-2-dehydro-3-deoxy-D-arabino-heptonate. His-283 is a binding site for Zn(2+). The tract at residues 393-838 (VIPGVPKNLN…WDALKQKFGV (446 aa)) is EPSP synthase. The active-site For EPSP synthase activity is Cys-820. The tract at residues 859-1051 (NASIIIIGMR…RKKHLSFFVS (193 aa)) is shikimate kinase. An ATP-binding site is contributed by 866–873 (GMRGAGKT). Residues 1052–1273 (LTLPDLRESG…AAPGQLSAAE (222 aa)) form a 3-dehydroquinase region. Catalysis depends on His-1175, which acts as the Proton acceptor; for 3-dehydroquinate dehydratase activity. Lys-1203 functions as the Schiff-base intermediate with substrate; for 3-dehydroquinate dehydratase activity in the catalytic mechanism. The shikimate dehydrogenase stretch occupies residues 1286 to 1571 (AKKFAVLGKP…NAVLGTNETK (286 aa)).

In the N-terminal section; belongs to the sugar phosphate cyclases superfamily. Dehydroquinate synthase family. This sequence in the 2nd section; belongs to the EPSP synthase family. It in the 3rd section; belongs to the shikimate kinase family. The protein in the 4th section; belongs to the type-I 3-dehydroquinase family. In the C-terminal section; belongs to the shikimate dehydrogenase family. In terms of assembly, homodimer. Zn(2+) serves as cofactor.

The protein localises to the cytoplasm. It catalyses the reaction 7-phospho-2-dehydro-3-deoxy-D-arabino-heptonate = 3-dehydroquinate + phosphate. The enzyme catalyses 3-dehydroquinate = 3-dehydroshikimate + H2O. It carries out the reaction shikimate + NADP(+) = 3-dehydroshikimate + NADPH + H(+). The catalysed reaction is shikimate + ATP = 3-phosphoshikimate + ADP + H(+). It catalyses the reaction 3-phosphoshikimate + phosphoenolpyruvate = 5-O-(1-carboxyvinyl)-3-phosphoshikimate + phosphate. The protein operates within metabolic intermediate biosynthesis; chorismate biosynthesis; chorismate from D-erythrose 4-phosphate and phosphoenolpyruvate: step 2/7. Its pathway is metabolic intermediate biosynthesis; chorismate biosynthesis; chorismate from D-erythrose 4-phosphate and phosphoenolpyruvate: step 3/7. It functions in the pathway metabolic intermediate biosynthesis; chorismate biosynthesis; chorismate from D-erythrose 4-phosphate and phosphoenolpyruvate: step 4/7. It participates in metabolic intermediate biosynthesis; chorismate biosynthesis; chorismate from D-erythrose 4-phosphate and phosphoenolpyruvate: step 5/7. The protein operates within metabolic intermediate biosynthesis; chorismate biosynthesis; chorismate from D-erythrose 4-phosphate and phosphoenolpyruvate: step 6/7. Its function is as follows. The AROM polypeptide catalyzes 5 consecutive enzymatic reactions in prechorismate polyaromatic amino acid biosynthesis. In Talaromyces marneffei (strain ATCC 18224 / CBS 334.59 / QM 7333) (Penicillium marneffei), this protein is Pentafunctional AROM polypeptide 2.